The sequence spans 560 residues: Flagellar M-ring protein (560 aa).

A helical transmembrane segment spans residues 26-46; the sequence is IPLIVAGSAAVAIVVAMVLWA. Positions 304–372 are disordered; the sequence is VGAGYPGGVP…TSNYEVDRTI (69 aa). Residues 331–353 are compositionally biased toward low complexity; the sequence is PPTNQQNAQNTPQTSTSTNSNSA. The span at 354-366 shows a compositional bias: polar residues; the sequence is GPRSTQRNETSNY. A helical membrane pass occupies residues 455 to 475; it reads FIDQLLAAGRWLLVLVVAWIL.

It belongs to the FliF family. As to quaternary structure, the basal body constitutes a major portion of the flagellar organelle and consists of four rings (L,P,S, and M) mounted on a central rod. The M ring is integral to the inner membrane of the cell and may be connected to the flagellar rod via the S ring. The S (supramembrane ring) lies just distal to the M ring. The L and P rings lie in the outer membrane and the periplasmic space, respectively.

The protein localises to the cell inner membrane. It localises to the bacterial flagellum basal body. In terms of biological role, the M ring may be actively involved in energy transduction. The protein is Flagellar M-ring protein (fliF) of Salmonella typhimurium (strain LT2 / SGSC1412 / ATCC 700720).